Consider the following 106-residue polypeptide: UPF0060 membrane protein RL1530 (106 aa).

4 helical membrane-spanning segments follow: residues 4–24, 30–50, 58–78, and 86–106; these read IIFA…WAWL, VWWL…LTLV, TFAA…WLVE, and DIGG…APRG.

This sequence belongs to the UPF0060 family.

It is found in the cell inner membrane. In Rhizobium johnstonii (strain DSM 114642 / LMG 32736 / 3841) (Rhizobium leguminosarum bv. viciae), this protein is UPF0060 membrane protein RL1530.